We begin with the raw amino-acid sequence, 335 residues long: E3 ubiquitin-protein ligase NLA (335 aa).

The SPX domain occupies 1–154 (MKFCKKYEEY…ESRQGQAFKT (154 aa)). Residues 231–280 (CSICLDTVFDPISLTCGHIYCYMCACSAASVNVVDGLKTAEATEKCPLCR) form an RING-type zinc finger.

As to quaternary structure, interacts with UBC8. Interacts with PHT1-1 and PHT1-4. Forms homodimers (via RING domain). Interacts with UBC24/PHO2. Interacts with NPF2.13/NRT1.7. Interacts with NAC92/ORE1. High expression in roots and stems, medium in seedlings, flowers, rosette and cauline leaves, and very low in siliques. Detected in cotyledons, hypocotyls, pedicel, receptacle, pistil, sepal, filament of stamen and at the two ends of developing siliques.

The protein localises to the nucleus speckle. Its subcellular location is the nucleus. It localises to the cell membrane. It catalyses the reaction S-ubiquitinyl-[E2 ubiquitin-conjugating enzyme]-L-cysteine + [acceptor protein]-L-lysine = [E2 ubiquitin-conjugating enzyme]-L-cysteine + N(6)-ubiquitinyl-[acceptor protein]-L-lysine.. It functions in the pathway protein modification; protein ubiquitination. In terms of biological role, E3 ubiquitin-protein ligase that mediates E2-dependent protein ubiquitination. Plays a role in salicylic acid-mediated negative feedback regulation of salicylic acid (SA) accumulation. May be involved in the overall regulation of SA, benzoic acid and phenylpropanoid biosynthesis. Involved in defense response. May act as negative regulator of resistance to the necrotrophic fungal pathogen Plectosphaerella cucumerina by modulating the accumulation of the phytoalexin camalexin and the salicylic acid- and jasmonate- dependent defense pathways. Controls the adaptability to nitrogen limitation by channeling the phenylpropanoid metabolic flux to the induced anthocyanin synthesis. Involved in the regulation of inorganic phosphate (Pi) homeostasis in a nitrate-dependent fashion. Directs the ubiquitination and subsequent degradation of the plasma membrane-localized inorganic phosphate transporters PHT1-1 and PHT1-4, to maintain phosphate homeostasis. The ubiquitination of PHTs triggers their clathrin-dependent endocytosis and trafficking to the vacuole through the endosomal pathway for degradation. Functions cooperatively with UBC24/PHO2 to regulate the abundance of PHT1-1, PHT1-2 and PHT1-3 in different subcellular compartments. Regulates Pi homeostasis by mediating, cooperatively with UBC24/PHO2, polyubiquitination of PHT1-4 and its targeting for degradation. Directs the polyubiquitination and subsequent degradation of the plasma membrane-localized nitrate transporter NPF2.13/NRT1.7, to help plants to adapt to nitrogen deficiency by regulating the source-to-sink remobilization of nitrate. Regulates leaf senescence during nitrogen deficiency by mediating, cooperatively with UBC24/PHO2, polyubiquitination of NAC92/ORE1 and its targeting for degradation. This Arabidopsis thaliana (Mouse-ear cress) protein is E3 ubiquitin-protein ligase NLA.